The sequence spans 230 residues: Endonuclease NucS (230 aa).

This sequence belongs to the NucS endonuclease family.

It localises to the cytoplasm. Functionally, cleaves both 3' and 5' ssDNA extremities of branched DNA structures. The sequence is that of Endonuclease NucS from Corynebacterium efficiens (strain DSM 44549 / YS-314 / AJ 12310 / JCM 11189 / NBRC 100395).